The primary structure comprises 148 residues: 3-dehydroquinate dehydratase (148 aa).

Catalysis depends on Y23, which acts as the Proton acceptor. Residues N75, H81, and D88 each coordinate substrate. H101 functions as the Proton donor in the catalytic mechanism. Substrate contacts are provided by residues 102-103 (IS) and R112.

It belongs to the type-II 3-dehydroquinase family. In terms of assembly, homododecamer.

The catalysed reaction is 3-dehydroquinate = 3-dehydroshikimate + H2O. It participates in metabolic intermediate biosynthesis; chorismate biosynthesis; chorismate from D-erythrose 4-phosphate and phosphoenolpyruvate: step 3/7. Functionally, catalyzes a trans-dehydration via an enolate intermediate. This Methylococcus capsulatus (strain ATCC 33009 / NCIMB 11132 / Bath) protein is 3-dehydroquinate dehydratase.